The chain runs to 862 residues: DNA mismatch repair protein MutS (862 aa).

604–611 contacts ATP; that stretch reads GPNMAGKS.

This sequence belongs to the DNA mismatch repair MutS family.

In terms of biological role, this protein is involved in the repair of mismatches in DNA. It is possible that it carries out the mismatch recognition step. This protein has a weak ATPase activity. The sequence is that of DNA mismatch repair protein MutS from Brevibacillus brevis (strain 47 / JCM 6285 / NBRC 100599).